The primary structure comprises 272 residues: 3-methyl-2-oxobutanoate hydroxymethyltransferase (272 aa).

Positions 43 and 82 each coordinate Mg(2+). Residues 43–44 (DS), Asp82, and Lys112 contribute to the 3-methyl-2-oxobutanoate site. Position 114 (Glu114) interacts with Mg(2+). The active-site Proton acceptor is Glu179.

This sequence belongs to the PanB family. As to quaternary structure, homodecamer; pentamer of dimers. It depends on Mg(2+) as a cofactor.

It is found in the cytoplasm. It carries out the reaction 3-methyl-2-oxobutanoate + (6R)-5,10-methylene-5,6,7,8-tetrahydrofolate + H2O = 2-dehydropantoate + (6S)-5,6,7,8-tetrahydrofolate. It functions in the pathway cofactor biosynthesis; (R)-pantothenate biosynthesis; (R)-pantoate from 3-methyl-2-oxobutanoate: step 1/2. In terms of biological role, catalyzes the reversible reaction in which hydroxymethyl group from 5,10-methylenetetrahydrofolate is transferred onto alpha-ketoisovalerate to form ketopantoate. This is 3-methyl-2-oxobutanoate hydroxymethyltransferase from Staphylococcus aureus (strain COL).